A 15639-amino-acid chain; its full sequence is FR901469 synthetase (15639 aa).

Residues 5–81 (HTSDGLRKLL…DLVDKIIEQQ (77 aa)) enclose the Carrier 1 domain. Residue serine 42 is modified to O-(pantetheine 4'-phosphoryl)serine. The segment covering 82 to 94 (LEEEEEDDDSLDN) has biased composition (acidic residues). The disordered stretch occupies residues 82–105 (LEEEEEDDDSLDNESERDHSQKDL). A condensation 1 region spans residues 140 to 553 (PCLSMQEGCL…RDFLPLTEDD (414 aa)). The adenylation 1 stretch occupies residues 579 to 971 (TISKQPDAVA…LGRRDTQVKI (393 aa)). The 77-residue stretch at 1108–1184 (TPATAIEKEL…ELALVARSTT (77 aa)) folds into the Carrier 2 domain. The residue at position 1145 (serine 1145) is an O-(pantetheine 4'-phosphoryl)serine. Residues 1219–1626 (RSSNRFNQSV…TITHLVKRLA (408 aa)) are epimerase 1. A condensation 2 region spans residues 1667–2097 (EDVLPCTPIQ…LGNLSLLTNN (431 aa)). The adenylation 2 stretch occupies residues 2122–2518 (QEAAKEYTNA…GRRDNQIKIR (397 aa)). In terms of domain architecture, Carrier 3 spans 2654–2730 (VPATALEKQL…ELALKAKSTT (77 aa)). Serine 2691 is modified (O-(pantetheine 4'-phosphoryl)serine). An epimerase 2 region spans residues 2761 to 3176 (VSAGEHRYNQ…TELLHRLEQM (416 aa)). The condensation 3 stretch occupies residues 3215-3640 (QDIYPCSPTQ…DDLIMMSPED (426 aa)). Positions 3669–4059 (TQPHAPAVAA…MGRIDSQIKI (391 aa)) are adenylation 3. The Carrier 4 domain maps to 4193–4269 (PPSNDAERMV…QLAAIVTQRG (77 aa)). Serine 4230 carries the post-translational modification O-(pantetheine 4'-phosphoryl)serine. The interval 4316–4714 (EDVYPCTPLQ…ILAHGTGLEE (399 aa)) is condensation 4. The tract at residues 4756 to 5149 (TEAASTRPDA…GRLDTQAKLR (394 aa)) is adenylation 4. Positions 5284 to 5360 (EPATIMERQL…DLASHIDHHT (77 aa)) constitute a Carrier 5 domain. O-(pantetheine 4'-phosphoryl)serine is present on serine 5321. Positions 5402–5802 (EDIYPCTPLQ…TVFAQLCDSS (401 aa)) are condensation 5. The interval 5847–6238 (KYPNEPAVHA…LGRRDSQMKV (392 aa)) is adenylation 5. The Carrier 6 domain occupies 6375–6451 (QPSTTAEIKL…DMAKIVEEHV (77 aa)). The residue at position 6412 (serine 6412) is an O-(pantetheine 4'-phosphoryl)serine. The segment at 6494-6889 (EDVYPATPLQ…RFAKVYQQLS (396 aa)) is condensation 6. Residues 6952-7335 (WDGSMTYAEL…GRRDTQIKIR (384 aa)) form an adenylation 6 region. Positions 7473–7546 (TAMEEQLRTV…QLALLASTDE (74 aa)) constitute a Carrier 7 domain. Residue serine 7507 is modified to O-(pantetheine 4'-phosphoryl)serine. Residues 7580 to 7992 (MGENRYNQSV…SKTLEELTTQ (413 aa)) form an epimerase 3 region. Residues 8034–8459 (EDVFPASPMQ…QRMRNISLAS (426 aa)) are condensation 7. The segment at 8486 to 8882 (QKSVHARPDA…GRRDTQVKIR (397 aa)) is adenylation 7. Residues 9015–9091 (QPATDAERQL…DLAKTIQDSE (77 aa)) enclose the Carrier 8 domain. Residue serine 9052 is modified to O-(pantetheine 4'-phosphoryl)serine. Residues 9136–9535 (EDVYPCTPLQ…FAAIFRQLCD (400 aa)) form a condensation 8 region. The interval 9583-9974 (KNPHAIAVNA…GRRDNQMKIR (392 aa)) is adenylation 8. The 77-residue stretch at 10110-10186 (EPATPMEMQL…GLAALIQKQI (77 aa)) folds into the Carrier 9 domain. At serine 10147 the chain carries O-(pantetheine 4'-phosphoryl)serine. The interval 10186 to 10208 (IDEEEEYDDSEEEEEDDEEEVRE) is disordered. Over residues 10187–10206 (DEEEEYDDSEEEEEDDEEEV) the composition is skewed to acidic residues. Residues 10240–10662 (VEDVYPCTPL…VLSETDKTKI (423 aa)) are condensation 9. Positions 10683–11082 (KQAIERPNAP…GRRDTQIKIR (400 aa)) are adenylation 9. Residues 11217–11293 (EPATGMERHL…DLARETESQG (77 aa)) enclose the Carrier 10 domain. Serine 11254 carries the O-(pantetheine 4'-phosphoryl)serine modification. The condensation 10 stretch occupies residues 11329-11725 (EDVYPCTPLQ…ETIFQQLSSV (397 aa)). An adenylation 10 region spans residues 11770 to 12165 (FKRTADKQPE…GRRDTQIKVR (396 aa)). The 77-residue stretch at 12298 to 12374 (EPSTEMERRI…DLAAAVQGRI (77 aa)) folds into the Carrier 11 domain. Serine 12335 is subject to O-(pantetheine 4'-phosphoryl)serine. Residues 12418 to 12830 (EDVYPATPLQ…IQDIEMVSEQ (413 aa)) form a condensation 11 region. An adenylation 11 region spans residues 12861-13249 (SRADEIAICA…GRRDTQIKIR (389 aa)). The region spanning 13383-13459 (MPGTVQEEQL…QLGQKVKEAV (77 aa)) is the Carrier 12 domain. An O-(pantetheine 4'-phosphoryl)serine modification is found at serine 13420. Residues 13476–13901 (APIQQMFFEQ…LKDMTSTLLQ (426 aa)) are epimerase 4. Positions 13940 to 14369 (EDILPCSPIQ…SIVGEHDLQQ (430 aa)) are condensation 12. An adenylation 12 region spans residues 14390-14789 (RDAAHRTPDA…GRGDGQIKIR (400 aa)). The region spanning 14916 to 14992 (LPASADEGAL…DMASVASAAR (77 aa)) is the Carrier 13 domain. Position 14953 is an O-(pantetheine 4'-phosphoryl)serine (serine 14953). The tract at residues 15062-15433 (QHAVDLAALK…DIMVRLASQQ (372 aa)) is condensation 13. Disordered regions lie at residues 15434-15511 (EGTV…ENRQ) and 15617-15639 (VQTN…KGHI). Low complexity predominate over residues 15455–15472 (NGTNGSNGDGTDAANGIG). The span at 15482 to 15494 (AVEKSSGDAEVEK) shows a compositional bias: basic and acidic residues. Over residues 15495–15511 (VSTNGHADNNTSAENRQ) the composition is skewed to polar residues.

This sequence belongs to the NRP synthetase family.

It functions in the pathway antifungal biosynthesis. In terms of biological role, nonribosomal peptide synthetase; part of the gene cluster that mediates the biosynthesis of the antifungal antibiotic FR901469, an inhibitor of beta-1,3-glucansynthase, exerting antifungal activity against the pathogenes Candida albicans and Aspergillus fumigatus. FR901469 is a cyclic depsipeptide containing 12 amino acid residues and a fatty acid chain. The NRPS frbI contains 12 modules responsible for the formation of the depsipeptide backbone which is denoted as Acyl-Thr-Ala-Tyr-Val-4OHPro-Thr-Thr-3OHPro-threo3OHGln-Gly-Thr-Orn-OH (C71H116N14O23). The PKS frbB is probably involved in the production of the hydrocarbon chain, and the acyl-CoA ligase frbC might be involved in the transport of the chain to the peptide ptoduct of frbI. Because FR901469 contains 3 hydroxylated amino acid residues, the 3 oxygenases frbA, frbH, and frbJ might be participating in amino acid hydroxylation. As no thioesterase domains were detected in frbI or frbB, the thioesterases frbD and frbE may instead release and cyclize the products of the NRPS and PKS, respectively. The sequence is that of FR901469 synthetase from Dothideomycetidae sp. (strain 11243) (Fungal sp. (strain No.11243)).